The primary structure comprises 511 residues: DEP domain-containing protein 7 (511 aa).

The DEP domain maps to 46 to 136; it reads LQTQVEVKKR…SSCSLYRFTT (91 aa).

It belongs to the DEPDC7 family. In terms of tissue distribution, expressed in liver.

The chain is DEP domain-containing protein 7 (DEPDC7) from Homo sapiens (Human).